Here is a 406-residue protein sequence, read N- to C-terminus: Ribulose bisphosphate carboxylase large chain (406 aa).

Positions 101 and 151 each coordinate substrate. K153 functions as the Proton acceptor in the catalytic mechanism. K155 contributes to the substrate binding site. Mg(2+)-binding residues include K179, D181, and E182. K179 is subject to N6-carboxylysine. The active-site Proton acceptor is the H272. Residues R273, H305, and S357 each contribute to the substrate site.

This sequence belongs to the RuBisCO large chain family. Type I subfamily. As to quaternary structure, heterohexadecamer of 8 large chains and 8 small chains; disulfide-linked. The disulfide link is formed within the large subunit homodimers. The cofactor is Mg(2+). In terms of processing, the disulfide bond which can form in the large chain dimeric partners within the hexadecamer appears to be associated with oxidative stress and protein turnover.

The protein localises to the plastid. It is found in the chloroplast. It catalyses the reaction 2 (2R)-3-phosphoglycerate + 2 H(+) = D-ribulose 1,5-bisphosphate + CO2 + H2O. It carries out the reaction D-ribulose 1,5-bisphosphate + O2 = 2-phosphoglycolate + (2R)-3-phosphoglycerate + 2 H(+). In terms of biological role, ruBisCO catalyzes two reactions: the carboxylation of D-ribulose 1,5-bisphosphate, the primary event in carbon dioxide fixation, as well as the oxidative fragmentation of the pentose substrate in the photorespiration process. Both reactions occur simultaneously and in competition at the same active site. The protein is Ribulose bisphosphate carboxylase large chain (rbcL) of Trichomanes striatum (Fern).